The following is a 440-amino-acid chain: Glutamate--tRNA ligase 2 (440 aa).

The short motif at 8 to 18 (PSPTGYLHVGN) is the 'HIGH' region element. The 'KMSKS' region signature appears at 239–243 (ALSKR). Position 242 (K242) interacts with ATP.

Belongs to the class-I aminoacyl-tRNA synthetase family. Glutamate--tRNA ligase type 1 subfamily. In terms of assembly, monomer.

It localises to the cytoplasm. The enzyme catalyses tRNA(Glu) + L-glutamate + ATP = L-glutamyl-tRNA(Glu) + AMP + diphosphate. Catalyzes the attachment of glutamate to tRNA(Glu) in a two-step reaction: glutamate is first activated by ATP to form Glu-AMP and then transferred to the acceptor end of tRNA(Glu). The sequence is that of Glutamate--tRNA ligase 2 from Dinoroseobacter shibae (strain DSM 16493 / NCIMB 14021 / DFL 12).